Reading from the N-terminus, the 794-residue chain is E3 ubiquitin-protein ligase wwp-1 (794 aa).

Positions 1–16 are enriched in low complexity; that stretch reads MARNEPSSQQPSSSGS. Disordered stretches follow at residues 1–31 and 155–198; these read MARN…KPSK and RSAG…AAPT. The C2 domain maps to 10-124; sequence QPSSSGSNGT…TRNENGEFKN (115 aa). Residues 17–27 are compositionally biased toward polar residues; that stretch reads NGTPAQQNGSA. The span at 161 to 186 shows a compositional bias: low complexity; it reads AETAASASSEASTSNGVATSSSARRP. WW domains lie at 219–252, 253–286, 324–358, and 366–399; these read EQLP…RPST, QPLP…RPTA, GPLP…DPRT, and QPLP…DPRT. The HECT domain occupies 460 to 794; sequence NAVDLRRRLY…IEMTEGFGNE (335 aa). The active-site Glycyl thioester intermediate is Cys762.

In terms of assembly, interacts (via WW domains) with Kruppel-like factor klf-1. Interacts with ubiquitin-conjugating enzyme E2 ubc-18. Expressed in neurons localized in the head and tail of adults.

It catalyses the reaction S-ubiquitinyl-[E2 ubiquitin-conjugating enzyme]-L-cysteine + [acceptor protein]-L-lysine = [E2 ubiquitin-conjugating enzyme]-L-cysteine + N(6)-ubiquitinyl-[acceptor protein]-L-lysine.. It participates in protein modification; protein ubiquitination. E3 ubiquitin-protein ligase which accepts ubiquitin from an E2 ubiquitin-conjugating enzyme in the form of a thioester and then directly transfers the ubiquitin to targeted substrates. Ubiquitinates klf-1. Required for diet restriction-mediated lifespan extension, acting in concert with Kruppel-like factor klf-1 in the intestine to perhaps modulate genes involved in lipid metabolism. Probably acting downstream of the Insulin/IGF-1-like signaling (IIS) mediated pathway, plays a role in the immune response to infection by the Gram-negative bacterium P.aeruginosa, at least partly in response to bacterial pore-forming toxins. This chain is E3 ubiquitin-protein ligase wwp-1, found in Caenorhabditis elegans.